Here is a 512-residue protein sequence, read N- to C-terminus: Serine/threonine-protein kinase grp (512 aa).

The Protein kinase domain occupies 22–279 (WTLAQTLGEG…LEKTLDHKWC (258 aa)). ATP contacts are provided by residues 28-36 (LGEGAYGEV) and Lys51. Asp143 serves as the catalytic Proton acceptor. The tract at residues 335–360 (PTMRSDDDFNVRLGSGRSKEDGGDRQ) is disordered.

It belongs to the protein kinase superfamily. CAMK Ser/Thr protein kinase family. NIM1 subfamily. Phosphorylated in a MEI-41/ATR dependent manner in response to DNA damage or the presence of unreplicated DNA.

The protein localises to the nucleus. The catalysed reaction is L-seryl-[protein] + ATP = O-phospho-L-seryl-[protein] + ADP + H(+). It catalyses the reaction L-threonyl-[protein] + ATP = O-phospho-L-threonyl-[protein] + ADP + H(+). Functionally, serine/threonine-protein kinase which is required for checkpoint-mediated cell cycle arrest and activation of DNA repair in response to the presence of DNA damage or unreplicated DNA. May also negatively regulate cell cycle progression during unperturbed cell cycles. May phosphorylate the CDC25 phosphatase stg, which promotes its degradation. This results in increased inhibitory tyrosine phosphorylation of Cdk1-cyclin complexes and consequent inhibition of cell cycle progression. This Drosophila melanogaster (Fruit fly) protein is Serine/threonine-protein kinase grp.